A 261-amino-acid chain; its full sequence is Triosephosphate isomerase (261 aa).

Residue 10–12 (NWK) participates in substrate binding. Catalysis depends on H100, which acts as the Electrophile. The active-site Proton acceptor is E172. Residues G178, S218, and 239–240 (GG) contribute to the substrate site.

Belongs to the triosephosphate isomerase family. Homodimer.

The protein resides in the cytoplasm. It carries out the reaction D-glyceraldehyde 3-phosphate = dihydroxyacetone phosphate. The protein operates within carbohydrate biosynthesis; gluconeogenesis. It functions in the pathway carbohydrate degradation; glycolysis; D-glyceraldehyde 3-phosphate from glycerone phosphate: step 1/1. Its function is as follows. Involved in the gluconeogenesis. Catalyzes stereospecifically the conversion of dihydroxyacetone phosphate (DHAP) to D-glyceraldehyde-3-phosphate (G3P). The chain is Triosephosphate isomerase from Rhodococcus jostii (strain RHA1).